The following is a 970-amino-acid chain: Unconventional myosin-XIX (970 aa).

A Myosin motor domain is found at 35-758 (YKLDDLTRVN…MLELLECGRA (724 aa)). 132–139 (GESGAGKT) is an ATP binding site. Residues 602 to 624 (LEQLLQVLHSTTPHYIRCIKPNS) are actin-binding. At Ser685 the chain carries Phosphoserine. IQ domains are found at residues 759–779 (RVLE…RHRE) and 783–812 (QWRA…AATV). The interval 824–970 (MACLAAKELD…VTSSAFTGLG (147 aa)) is myMOMA region.

This sequence belongs to the TRAFAC class myosin-kinesin ATPase superfamily. Myosin family. Myosin is a hexamer of 2 heavy chains and 4 light chains: interacts with myosin light chains MYL9 and MYL12B. Widely expressed in multiple tissues and cell lines.

It localises to the mitochondrion outer membrane. The protein resides in the cytoplasm. The protein localises to the cytoskeleton. Its function is as follows. Actin-based motor molecule with ATPase activity that localizes to the mitochondrion outer membrane. Motor protein that moves towards the plus-end of actin filaments. Required for mitochondrial inheritance during mitosis. May be involved in mitochondrial transport or positioning. The polypeptide is Unconventional myosin-XIX (Homo sapiens (Human)).